Reading from the N-terminus, the 432-residue chain is Enolase (432 aa).

The interval 41 to 64 is disordered; it reads QVPSGASTGSFEAHELRDGDPKRY. Residues 52–64 show a composition bias toward basic and acidic residues; that stretch reads EAHELRDGDPKRY. Q168 provides a ligand contact to (2R)-2-phosphoglycerate. E211 (proton donor) is an active-site residue. Mg(2+) is bound by residues D248, E289, and D316. 4 residues coordinate (2R)-2-phosphoglycerate: K341, R370, S371, and K392. Catalysis depends on K341, which acts as the Proton acceptor.

The protein belongs to the enolase family. Requires Mg(2+) as cofactor.

It is found in the cytoplasm. Its subcellular location is the secreted. It localises to the cell surface. The catalysed reaction is (2R)-2-phosphoglycerate = phosphoenolpyruvate + H2O. It participates in carbohydrate degradation; glycolysis; pyruvate from D-glyceraldehyde 3-phosphate: step 4/5. Its function is as follows. Catalyzes the reversible conversion of 2-phosphoglycerate (2-PG) into phosphoenolpyruvate (PEP). It is essential for the degradation of carbohydrates via glycolysis. The polypeptide is Enolase (Synechocystis sp. (strain ATCC 27184 / PCC 6803 / Kazusa)).